Reading from the N-terminus, the 349-residue chain is MAENAYSKAGVDVEAGYQVVERIKKHVARTERLGAMGALGSFGGMFDLSSLHLKEPVLVSGTDGVGTKLLLAIEADKHDTIGIDCVAMCVNDILAQGAEPLFFLDYIATGKTDPVKMEQIVKGVADGCEQAGAALIGGETAEMPDMYGSDDYDLAGFTVGAVEKQKLITEGAVKEGDTLIGIPSSGIHSNGYSLVRKIFFKDNELTLDAEISELDVPLVEELLKPTRIYVKPVLEVLKEVDVHGITHVTGGGFVENLPRMLTNDLAVKVELGSWPVLPIFDVMKKYGQLNEMEMYEIFNMGIGMVLAVAKADVERTLEVLVQNGEAAYVIGEVTTRENDAVIFTGGTKG.

It belongs to the AIR synthase family.

The protein localises to the cytoplasm. It carries out the reaction 2-formamido-N(1)-(5-O-phospho-beta-D-ribosyl)acetamidine + ATP = 5-amino-1-(5-phospho-beta-D-ribosyl)imidazole + ADP + phosphate + H(+). It functions in the pathway purine metabolism; IMP biosynthesis via de novo pathway; 5-amino-1-(5-phospho-D-ribosyl)imidazole from N(2)-formyl-N(1)-(5-phospho-D-ribosyl)glycinamide: step 2/2. This is Phosphoribosylformylglycinamidine cyclo-ligase from Listeria monocytogenes serotype 4a (strain HCC23).